The chain runs to 1148 residues: Phospholipid-transporting ATPase IB (1148 aa).

The Cytoplasmic segment spans residues 1–54 (MSRATSVGDQLDVPARTIYLNQPHLNKFCDNQISTAKYSVVTFLPRFLYEQIRR). Thr5 is modified (phosphothreonine). Residues 55–75 (AANAFFLFIALLQQIPDVSPT) form a helical membrane-spanning segment. The Exoplasmic loop segment spans residues 76–79 (GRYT). A helical transmembrane segment spans residues 80 to 100 (TLVPLIIILTIAGIKEIVEDF). Residues 101–276 (KRHKADNAVN…SNVEKVTNVQ (176 aa)) are Cytoplasmic-facing. A helical membrane pass occupies residues 277-297 (ILVLFGILLVMALVSSVGALY). At 298–324 (WNGSQGGKNWYIKKMDATSDNFGYNLL) the chain is on the exoplasmic loop side. Residues 325-345 (TFIILYNNLIPISLLVTLEVV) form a helical membrane-spanning segment. At 346–847 (KYTQALFINW…CILYCFYKNV (502 aa)) the chain is on the cytoplasmic side. Residue Asp388 is the 4-aspartylphosphate intermediate of the active site. 12 residues coordinate ATP: Asp388, Lys389, Thr390, Glu488, Phe529, Lys552, Arg585, Thr665, Gly666, Asp667, Arg755, and Lys761. Asp388 provides a ligand contact to Mg(2+). Position 390 (Thr390) interacts with Mg(2+). Asp781 is a Mg(2+) binding site. ATP contacts are provided by Asn784 and Asp785. Position 785 (Asp785) interacts with Mg(2+). The helical transmembrane segment at 848 to 868 (VLYIIELWFAFVNGFSGQILF) threads the bilayer. Residues 869 to 870 (ER) are Exoplasmic loop-facing. Residues 871–891 (WCIGLYNVIFTALPPFTLGIF) form a helical membrane-spanning segment. Topologically, residues 892 to 919 (ERSCSQESMLRFPQLYKITQNAEGFNTK) are cytoplasmic. Residues 920-940 (VFWGHCINALVHSLILFWFPM) form a helical membrane-spanning segment. Residues 941–957 (KALEHDTVLANGHATDY) lie on the Exoplasmic loop side of the membrane. The helical transmembrane segment at 958–978 (LFVGNIVYTYVVVTVCLKAGL) threads the bilayer. At 979 to 988 (ETTAWTKFSH) the chain is on the cytoplasmic side. The chain crosses the membrane as a helical span at residues 989 to 1009 (LAVWGSMLIWLVFFGIYSTIW). Topologically, residues 1010–1023 (PTIPIAPDMKGQAT) are exoplasmic loop. A helical membrane pass occupies residues 1024–1044 (MVLSSAHFWLGLFLVPTACLI). Residues 1045–1148 (EDVAWRAAKH…DTTKQKSRKK (104 aa)) are Cytoplasmic-facing. The tract at residues 1102-1126 (PPTLFRGSSLQQSMPHGYAFSQEEH) is disordered.

This sequence belongs to the cation transport ATPase (P-type) (TC 3.A.3) family. Type IV subfamily. Component of a P4-ATPase flippase complex which consists of a catalytic alpha subunit and an accessory beta subunit. Interacts with TMEM30A to form a flippase complex. Mg(2+) is required as a cofactor. Expressed in retinal photoreceptor cells and testis.

It localises to the membrane. The protein localises to the golgi apparatus membrane. It is found in the endosome membrane. The protein resides in the cell membrane. Its subcellular location is the photoreceptor outer segment membrane. It localises to the photoreceptor inner segment membrane. The catalysed reaction is ATP + H2O + phospholipidSide 1 = ADP + phosphate + phospholipidSide 2.. It catalyses the reaction a 1,2-diacyl-sn-glycero-3-phospho-L-serine(out) + ATP + H2O = a 1,2-diacyl-sn-glycero-3-phospho-L-serine(in) + ADP + phosphate + H(+). It carries out the reaction a 1,2-diacyl-sn-glycero-3-phosphoethanolamine(in) + ATP + H2O = a 1,2-diacyl-sn-glycero-3-phosphoethanolamine(out) + ADP + phosphate + H(+). ATPase activity is stimulated by phosphatidylserine (PS) and minimally by phosphatidylethanolamine (PE). ATPase activity is inhibited by N-ethylmaleimide (NEM) and vanadate. Flippase activity is inhibited by NEM and 1,2-dioleoyl-sn-glycero-3-phospho-L-serine (DOPS). Functionally, catalytic component of a P4-ATPase flippase complex which catalyzes the hydrolysis of ATP coupled to the transport of aminophospholipids from the outer to the inner leaflet of various membranes and ensures the maintenance of asymmetric distribution of phospholipids. Able to translocate phosphatidylserine, but not phosphatidylcholine. Phospholipid translocation seems also to be implicated in vesicle formation and in uptake of lipid signaling molecules. Reconstituted to liposomes, the ATP8A2:TMEM30A flippase complex predominantly transports phosphatidylserine (PS) and to a lesser extent phosphatidylethanolamine (PE). Phospholipid translocation is not associated with a countertransport of an inorganic ion or other charged substrate from the cytoplasmic side toward the exoplasm in connection with the phosphorylation from ATP. ATP8A2:TMEM30A may be involved in regulation of neurite outgrowth. Proposed to function in the generation and maintenance of phospholipid asymmetry in photoreceptor disk membranes and neuronal axon membranes. May be involved in vesicle trafficking in neuronal cells. Required for normal visual and auditory function; involved in photoreceptor and inner ear spiral ganglion cell survival. This chain is Phospholipid-transporting ATPase IB, found in Bos taurus (Bovine).